Consider the following 296-residue polypeptide: GTPase Era (296 aa).

Positions 2-171 constitute an Era-type G domain; that stretch reads KAGFIAVVGR…LEALDPYLED (170 aa). The interval 10-17 is G1; the sequence is GRPNVGKS. 10–17 is a binding site for GTP; that stretch reads GRPNVGKS. The interval 36–40 is G2; the sequence is GTTRD. The segment at 57 to 60 is G3; that stretch reads DTPG. Residues 57–61 and 120–123 each bind GTP; these read DTPGI and NKVD. Positions 120 to 123 are G4; sequence NKVD. Positions 150 to 152 are G5; it reads ASG. The 78-residue stretch at 202–279 folds into the KH type-2 domain; sequence TRDEIPHSVA…YLGLWVKVKD (78 aa).

This sequence belongs to the TRAFAC class TrmE-Era-EngA-EngB-Septin-like GTPase superfamily. Era GTPase family. Monomer.

It localises to the cytoplasm. Its subcellular location is the cell inner membrane. In terms of biological role, an essential GTPase that binds both GDP and GTP, with rapid nucleotide exchange. Plays a role in 16S rRNA processing and 30S ribosomal subunit biogenesis and possibly also in cell cycle regulation and energy metabolism. The polypeptide is GTPase Era (Fusobacterium nucleatum subsp. nucleatum (strain ATCC 25586 / DSM 15643 / BCRC 10681 / CIP 101130 / JCM 8532 / KCTC 2640 / LMG 13131 / VPI 4355)).